The following is a 103-amino-acid chain: Small ribosomal subunit protein uS10 (103 aa).

Belongs to the universal ribosomal protein uS10 family. In terms of assembly, part of the 30S ribosomal subunit.

Functionally, involved in the binding of tRNA to the ribosomes. This is Small ribosomal subunit protein uS10 from Magnetococcus marinus (strain ATCC BAA-1437 / JCM 17883 / MC-1).